The following is a 472-amino-acid chain: Serralysin A (472 aa).

A propeptide spanning residues 1–17 (MEKNLSSRDDDALHSLS) is cleaved from the precursor. A Zn(2+)-binding site is contributed by H186. E187 is a catalytic residue. Positions 190 and 221 each coordinate Zn(2+). Positions 258, 260, 262, 290, 292, 293, 332, 334, 339, 341, 343, 348, 350, 352, 356, 357, 358, 359, 361, 365, 366, 367, 368, 370, 374, 375, 377, 379, 388, 395, and 405 each coordinate Ca(2+). Hemolysin-type calcium-binding repeat units follow at residues 337–354 (IGGSGNDLLIGNNADNIL) and 355–372 (RGGAGDDILYGGGGADRL).

This sequence belongs to the peptidase M10B family. The cofactor is Ca(2+). Requires Zn(2+) as cofactor.

It is found in the secreted. It carries out the reaction Preferential cleavage of bonds with hydrophobic residues in P1'.. This is Serralysin A (prtA) from Dickeya chrysanthemi (Pectobacterium chrysanthemi).